Reading from the N-terminus, the 219-residue chain is Elongation factor Ts (219 aa).

Residues 83–86 (TDFV) form an involved in Mg(2+) ion dislocation from EF-Tu region.

Belongs to the EF-Ts family.

It localises to the cytoplasm. Its function is as follows. Associates with the EF-Tu.GDP complex and induces the exchange of GDP to GTP. It remains bound to the aminoacyl-tRNA.EF-Tu.GTP complex up to the GTP hydrolysis stage on the ribosome. The protein is Elongation factor Ts of Synechococcus sp. (strain WH7803).